A 376-amino-acid polypeptide reads, in one-letter code: 4-hydroxy-3-methylbut-2-en-1-yl diphosphate synthase (flavodoxin) (376 aa).

Residues Cys272, Cys275, Cys307, and Glu314 each contribute to the [4Fe-4S] cluster site.

Belongs to the IspG family. It depends on [4Fe-4S] cluster as a cofactor.

The enzyme catalyses (2E)-4-hydroxy-3-methylbut-2-enyl diphosphate + oxidized [flavodoxin] + H2O + 2 H(+) = 2-C-methyl-D-erythritol 2,4-cyclic diphosphate + reduced [flavodoxin]. It participates in isoprenoid biosynthesis; isopentenyl diphosphate biosynthesis via DXP pathway; isopentenyl diphosphate from 1-deoxy-D-xylulose 5-phosphate: step 5/6. In terms of biological role, converts 2C-methyl-D-erythritol 2,4-cyclodiphosphate (ME-2,4cPP) into 1-hydroxy-2-methyl-2-(E)-butenyl 4-diphosphate. This Blochmanniella pennsylvanica (strain BPEN) protein is 4-hydroxy-3-methylbut-2-en-1-yl diphosphate synthase (flavodoxin).